Consider the following 96-residue polypeptide: Integration host factor subunit beta (96 aa).

Belongs to the bacterial histone-like protein family. Heterodimer of an alpha and a beta chain.

In terms of biological role, this protein is one of the two subunits of integration host factor, a specific DNA-binding protein that functions in genetic recombination as well as in transcriptional and translational control. In Caulobacter vibrioides (strain ATCC 19089 / CIP 103742 / CB 15) (Caulobacter crescentus), this protein is Integration host factor subunit beta.